The sequence spans 100 residues: ATP phosphoribosyltransferase (100 aa).

This sequence belongs to the ATP phosphoribosyltransferase family. Long subfamily. In terms of assembly, equilibrium between an active dimeric form, an inactive hexameric form and higher aggregates. Interconversion between the various forms is largely reversible and is influenced by the natural substrates and inhibitors of the enzyme. It depends on Mg(2+) as a cofactor.

Its subcellular location is the cytoplasm. The catalysed reaction is 1-(5-phospho-beta-D-ribosyl)-ATP + diphosphate = 5-phospho-alpha-D-ribose 1-diphosphate + ATP. The protein operates within amino-acid biosynthesis; L-histidine biosynthesis; L-histidine from 5-phospho-alpha-D-ribose 1-diphosphate: step 1/9. Its activity is regulated as follows. Feedback inhibited by histidine. Functionally, catalyzes the condensation of ATP and 5-phosphoribose 1-diphosphate to form N'-(5'-phosphoribosyl)-ATP (PR-ATP). Has a crucial role in the pathway because the rate of histidine biosynthesis seems to be controlled primarily by regulation of HisG enzymatic activity. In Klebsiella pneumoniae, this protein is ATP phosphoribosyltransferase (hisG).